Here is a 221-residue protein sequence, read N- to C-terminus: Large ribosomal subunit protein uL3 (221 aa).

Belongs to the universal ribosomal protein uL3 family. In terms of assembly, part of the 50S ribosomal subunit. Forms a cluster with proteins L14 and L19.

Its function is as follows. One of the primary rRNA binding proteins, it binds directly near the 3'-end of the 23S rRNA, where it nucleates assembly of the 50S subunit. The polypeptide is Large ribosomal subunit protein uL3 (Chlamydia trachomatis serovar A (strain ATCC VR-571B / DSM 19440 / HAR-13)).